A 426-amino-acid polypeptide reads, in one-letter code: Phosphomethylpyrimidine synthase (426 aa).

Residues Asn65, Met94, Tyr123, His162, 184–186 (SRG), 225–228 (DGMR), and Glu264 contribute to the substrate site. Residue His268 participates in Zn(2+) binding. Residue Tyr291 participates in substrate binding. His332 lines the Zn(2+) pocket. Positions 408, 411, and 415 each coordinate [4Fe-4S] cluster.

This sequence belongs to the ThiC family. Requires [4Fe-4S] cluster as cofactor.

The enzyme catalyses 5-amino-1-(5-phospho-beta-D-ribosyl)imidazole + S-adenosyl-L-methionine = 4-amino-2-methyl-5-(phosphooxymethyl)pyrimidine + CO + 5'-deoxyadenosine + formate + L-methionine + 3 H(+). It participates in cofactor biosynthesis; thiamine diphosphate biosynthesis. In terms of biological role, catalyzes the synthesis of the hydroxymethylpyrimidine phosphate (HMP-P) moiety of thiamine from aminoimidazole ribotide (AIR) in a radical S-adenosyl-L-methionine (SAM)-dependent reaction. This chain is Phosphomethylpyrimidine synthase, found in Methanococcus maripaludis (strain C7 / ATCC BAA-1331).